The sequence spans 650 residues: Acetyl-coenzyme A synthetase (650 aa).

CoA-binding positions include 191–194, Thr311, and Asn335; that span reads RGGR. ATP contacts are provided by residues 387-389, 411-416, Asp500, and Arg515; these read GEP and DTWWQT. Ser523 provides a ligand contact to CoA. Arg526 serves as a coordination point for ATP. The Mg(2+) site is built by Val537, His539, and Val542. Arg584 lines the CoA pocket. Lys609 carries the post-translational modification N6-acetyllysine.

Belongs to the ATP-dependent AMP-binding enzyme family. The cofactor is Mg(2+). Post-translationally, acetylated. Deacetylation by the SIR2-homolog deacetylase activates the enzyme.

It carries out the reaction acetate + ATP + CoA = acetyl-CoA + AMP + diphosphate. Its function is as follows. Catalyzes the conversion of acetate into acetyl-CoA (AcCoA), an essential intermediate at the junction of anabolic and catabolic pathways. AcsA undergoes a two-step reaction. In the first half reaction, AcsA combines acetate with ATP to form acetyl-adenylate (AcAMP) intermediate. In the second half reaction, it can then transfer the acetyl group from AcAMP to the sulfhydryl group of CoA, forming the product AcCoA. The protein is Acetyl-coenzyme A synthetase of Shewanella amazonensis (strain ATCC BAA-1098 / SB2B).